The chain runs to 611 residues: Beta-hexosaminidase (611 aa).

This sequence belongs to the glycosyl hydrolase 20 family. As to quaternary structure, homodimer.

It localises to the periplasm. The enzyme catalyses Hydrolysis of terminal non-reducing N-acetyl-D-hexosamine residues in N-acetyl-beta-D-hexosaminides.. It functions in the pathway glycan degradation; chitin degradation. Inhibited by mercuric ions, PNP-beta-Glc, PNP-beta-Gal, PNP-alpha-GlcNAc, and PNP-beta-S-GlcNAc. Its function is as follows. Hydrolyzes aryl-N-acetyl-beta-D-glucosaminide (aryl-beta-GlcNAc), aryl-beta-GalNAc and chitin oligosaccharides. Can hydrolyze rapidly the artificial substrates p-nitrophenyl-N-acetyl-beta-D-glucosaminide (PNP-beta-GlcNAc) and 4-methylumbelliferyl-beta-GlcNAc, and is slightly active on p-nitrophenyl-beta-GalNAc. This enzyme is not processive, i.e. when it hydrolyzes (GlcNAc)n, both products, (Glc-NAc)n-1 and the terminal GlcNAc, are released before the enzyme attacks a second molecule of (GlcNAc)n or (GlcNAc)n-1. The chain is Beta-hexosaminidase from Vibrio furnissii.